The primary structure comprises 402 residues: Elongation factor Tu (402 aa).

The region spanning 16 to 211 (KEHINIGTIG…AVDSYIDSPV (196 aa)) is the tr-type G domain. The tract at residues 25 to 32 (GHVDHGKT) is G1. 25–32 (GHVDHGKT) is a GTP binding site. Mg(2+) is bound at residue threonine 32. Residues 66 to 70 (GITIN) form a G2 region. A G3 region spans residues 87–90 (DCPG). GTP-binding positions include 87 to 91 (DCPGH) and 142 to 145 (NKID). Residues 142–145 (NKID) are G4. The interval 181 to 183 (SAR) is G5.

Belongs to the TRAFAC class translation factor GTPase superfamily. Classic translation factor GTPase family. EF-Tu/EF-1A subfamily. Monomer.

It is found in the cytoplasm. The enzyme catalyses GTP + H2O = GDP + phosphate + H(+). Functionally, GTP hydrolase that promotes the GTP-dependent binding of aminoacyl-tRNA to the A-site of ribosomes during protein biosynthesis. The polypeptide is Elongation factor Tu (Mesomycoplasma hyopneumoniae (strain 232) (Mycoplasma hyopneumoniae)).